The following is a 602-amino-acid chain: Translation factor GUF1 homolog, organellar chromatophore (602 aa).

Residues 7–189 (SRIRNFCIIA…AIVERIPPPV (183 aa)) form the tr-type G domain. GTP is bound by residues 16-23 (AHIDHGKS), 82-86 (DTPGH), and 136-139 (NKID).

It belongs to the TRAFAC class translation factor GTPase superfamily. Classic translation factor GTPase family. LepA subfamily.

It is found in the plastid. The protein localises to the organellar chromatophore. The enzyme catalyses GTP + H2O = GDP + phosphate + H(+). In terms of biological role, promotes protein synthesis. May act as a fidelity factor of the translation reaction, by catalyzing a one-codon backward translocation of tRNAs on improperly translocated ribosomes. This is Translation factor GUF1 homolog, organellar chromatophore from Paulinella chromatophora.